Consider the following 178-residue polypeptide: Large ribosomal subunit protein uL6 (178 aa).

It belongs to the universal ribosomal protein uL6 family. In terms of assembly, part of the 50S ribosomal subunit.

This protein binds to the 23S rRNA, and is important in its secondary structure. It is located near the subunit interface in the base of the L7/L12 stalk, and near the tRNA binding site of the peptidyltransferase center. The chain is Large ribosomal subunit protein uL6 from Enterococcus faecalis (strain ATCC 700802 / V583).